Reading from the N-terminus, the 371-residue chain is Ferrochelatase (371 aa).

Residues His-218 and Glu-299 each contribute to the Fe cation site.

The protein belongs to the ferrochelatase family.

It is found in the cytoplasm. The catalysed reaction is heme b + 2 H(+) = protoporphyrin IX + Fe(2+). The protein operates within porphyrin-containing compound metabolism; protoheme biosynthesis; protoheme from protoporphyrin-IX: step 1/1. Its function is as follows. Catalyzes the ferrous insertion into protoporphyrin IX. The chain is Ferrochelatase from Ralstonia nicotianae (strain ATCC BAA-1114 / GMI1000) (Ralstonia solanacearum).